The following is a 292-amino-acid chain: Protease HtpX homolog (292 aa).

Helical transmembrane passes span 7–27 (TFILMAALTALVMGMGGLIGG) and 29–49 (GGAVIALAIAGAGNLFAWWNS). Residue His-131 participates in Zn(2+) binding. Residue Glu-132 is part of the active site. Position 135 (His-135) interacts with Zn(2+). The next 2 membrane-spanning stretches (helical) occupy residues 148–168 (ATMAGAIAMLGNMLMFSSMFG) and 178–198 (LAAILAMIFAPMAAGLVQMAI). Zn(2+) is bound at residue Glu-203.

It belongs to the peptidase M48B family. Zn(2+) is required as a cofactor.

The protein resides in the cell inner membrane. In Paracoccus denitrificans (strain Pd 1222), this protein is Protease HtpX homolog.